Here is a 132-residue protein sequence, read N- to C-terminus: uncharacterized protein (132 aa).

Residue lysine 59 forms a Glycyl lysine isopeptide (Lys-Gly) (interchain with G-Cter in SAMP2) linkage.

This sequence belongs to the OsmC/Ohr family.

This is an uncharacterized protein from Haloferax volcanii (strain ATCC 29605 / DSM 3757 / JCM 8879 / NBRC 14742 / NCIMB 2012 / VKM B-1768 / DS2) (Halobacterium volcanii).